A 197-amino-acid polypeptide reads, in one-letter code: CDLACSLIYAPVCGSDGKTYPSECSMEATACIDEVVITKVHDGPCETKCSAACTKEYNPQCGTDGVTYANPCTLEYAKCKSDGEITFDHAGPCKPKCPTVCTLEYNPQCGTDGRTYGNPCQLKVAECESDGRITLDHPGECDACSLKKVVGPCRGAFRRYYFDSVSGKCEEFVYGGCGGNDNNFKTLDACQKRCMEE.

Disulfide bonds link C1-C31, C5-C24, C13-C45, C49-C79, C53-C72, C61-C93, C97-C127, C101-C120, C109-C141, C144-C194, C153-C177, and C169-C190. 3 Kazal-like domains span residues 1-47 (CDLA…PCET), 48-95 (KCSA…PCKP), and 96-143 (KCPT…ECDA). Positions 144–194 (CSLKKVVGPCRGAFRRYYFDSVSGKCEEFVYGGCGGNDNNFKTLDACQKRC) constitute a BPTI/Kunitz inhibitor domain.

Its function is as follows. Inhibits trypsin, kallikrein, subtilisin Carlsberg, human leukocyte elastase, porcine pancreatic elastase and chymotrypsin. Two domains are for the inhibition of chymotrypsin. This is Four-domain proteases inhibitor from Melithaea caledonica.